Here is a 119-residue protein sequence, read N- to C-terminus: NADH-quinone oxidoreductase subunit A (119 aa).

Helical transmembrane passes span 7–27 (FPVLLFIVVGVGLGLALMTIG), 63–83 (LIAILFILFDLETAFLFPWGV), and 88–108 (IGWPGFFAMGVFLLEFLVGFV).

It belongs to the complex I subunit 3 family. In terms of assembly, NDH-1 is composed of 14 different subunits. Subunits NuoA, H, J, K, L, M, N constitute the membrane sector of the complex.

It localises to the cell inner membrane. It catalyses the reaction a quinone + NADH + 5 H(+)(in) = a quinol + NAD(+) + 4 H(+)(out). Functionally, NDH-1 shuttles electrons from NADH, via FMN and iron-sulfur (Fe-S) centers, to quinones in the respiratory chain. The immediate electron acceptor for the enzyme in this species is believed to be ubiquinone. Couples the redox reaction to proton translocation (for every two electrons transferred, four hydrogen ions are translocated across the cytoplasmic membrane), and thus conserves the redox energy in a proton gradient. This chain is NADH-quinone oxidoreductase subunit A, found in Ralstonia pickettii (strain 12J).